A 474-amino-acid chain; its full sequence is Glutathione synthetase (474 aa).

Position 2 is an N-acetylalanine (Ala2). Residue Arg125 coordinates substrate. Glu144 contributes to the ATP binding site. Positions 144 and 146 each coordinate Mg(2+). Residues 148–151 (ISAS), 214–216 (ERN), Gln220, and 267–270 (RDGY) each bind substrate. Residues Lys305, 364–373 (KPQREGGGNN), Tyr375, and 398–401 (MEKI) each bind ATP. A Mg(2+)-binding site is contributed by Glu368. The residue at position 415 (Ser415) is a Phosphoserine. Residue Glu425 coordinates ATP. Arg450 lines the substrate pocket. 2 residues coordinate ATP: Lys452 and Asp458. Position 461 to 462 (461 to 462 (VA)) interacts with substrate.

The protein belongs to the eukaryotic GSH synthase family. Homodimer. The cofactor is Mg(2+).

The catalysed reaction is gamma-L-glutamyl-L-cysteine + glycine + ATP = glutathione + ADP + phosphate + H(+). It carries out the reaction gamma-L-glutamyl-(2S)-2-aminobutanoate + glycine + ATP = ophthalmate + ADP + phosphate + H(+). It functions in the pathway sulfur metabolism; glutathione biosynthesis; glutathione from L-cysteine and L-glutamate: step 2/2. In terms of biological role, catalyzes the production of glutathione from gamma-glutamylcysteine and glycine in an ATP-dependent manner. Glutathione (gamma-glutamylcysteinylglycine, GSH) is the most abundant intracellular thiol in living aerobic cells and is required for numerous processes including the protection of cells against oxidative damage, amino acid transport, the detoxification of foreign compounds, the maintenance of protein sulfhydryl groups in a reduced state and acts as a cofactor for a number of enzymes. Participates in ophthalmate biosynthesis in hepatocytes. The protein is Glutathione synthetase of Homo sapiens (Human).